A 669-amino-acid polypeptide reads, in one-letter code: Translation factor GUF1, mitochondrial (669 aa).

The N-terminal 49 residues, Met-1–Tyr-49, are a transit peptide targeting the mitochondrion. The region spanning Glu-66 to Lys-247 is the tr-type G domain. GTP is bound by residues Ala-75–Ser-82, Asp-140–His-144, and Asn-194–Asp-197.

The protein belongs to the TRAFAC class translation factor GTPase superfamily. Classic translation factor GTPase family. LepA subfamily.

The protein localises to the mitochondrion inner membrane. It catalyses the reaction GTP + H2O = GDP + phosphate + H(+). Promotes mitochondrial protein synthesis. May act as a fidelity factor of the translation reaction, by catalyzing a one-codon backward translocation of tRNAs on improperly translocated ribosomes. Binds to mitochondrial ribosomes in a GTP-dependent manner. This chain is Translation factor GUF1, mitochondrial, found in Homo sapiens (Human).